Consider the following 317-residue polypeptide: MPADTRPAAIVLMGPTASGKSQLAIDIAKRWGGEVISVDSVLVYRGLDIGTAKPNAAMRASVPHHLIDICEPWETYSAADFAHDARAAIDMIVRRGALPILTGGTGLYFRALLAGLSDMPPAHPEIRAMIAAEAKRDSWATLHTRLAEVDAITAARIHATDPQRIQRALEVYLVSGRSMSDWQNQPPKQRLPLRVLKLVLAPTHRKVLHFRIAQRFKAMLDNGLLAEVNALRTHPSIHAMARPLDLPAMRAVGYRQCWEHLDGMYTAEMLYQRSVAATRQLAKRQLTWLRGELDALWFDPEHDQSRIEKVMEAFLNR.

Residue 14-21 coordinates ATP; the sequence is GPTASGKS. Residue 16 to 21 participates in substrate binding; the sequence is TASGKS. 2 interaction with substrate tRNA regions span residues 39 to 42 and 163 to 167; these read DSVL and QRIQR.

It belongs to the IPP transferase family. Monomer. It depends on Mg(2+) as a cofactor.

It carries out the reaction adenosine(37) in tRNA + dimethylallyl diphosphate = N(6)-dimethylallyladenosine(37) in tRNA + diphosphate. Functionally, catalyzes the transfer of a dimethylallyl group onto the adenine at position 37 in tRNAs that read codons beginning with uridine, leading to the formation of N6-(dimethylallyl)adenosine (i(6)A). The chain is tRNA dimethylallyltransferase from Xylella fastidiosa (strain M12).